The chain runs to 309 residues: MASGYDFGWIPVLLSLFTLTDASSQTVNQELSNIFNELWKLDVNRMEPLTNYNISLQGKAGYIPQGSTNVVDHASSPLFVNVDEAKLSSITTYARFMKLLDNYERSTGVAERVTAEEVTENNSFLDAILETAVMKRAHQYLIGKGKSRSDLRQFKSQLYYMWFRLYHRERNGGEDSSGFEHVFVGETKFGREIMGLHNWVQFYLQEKQNLLDYKGYKARANDVPDADDHVLNVQFSWHGLVKPVASAFVGVSPEFEMAVFTILFLTSTEKTTTAVVNLDEYQLEMVVHRHGRCIGTAYPKLLSSNNRHM.

Positions M1–A22 are cleaved as a signal peptide. The region spanning V27–S303 is the EndoU domain. 2 N-linked (GlcNAc...) asparagine glycosylation sites follow: N53 and N121. Catalysis depends on residues H181, H197, and K242.

This sequence belongs to the ENDOU family. As to quaternary structure, monomer. Mn(2+) serves as cofactor.

It is found in the secreted. It catalyses the reaction ribonucleotidyl-uridine-RNA = a 5'-end dephospho-uridine-RNA + a 3'-end 2',3'-cyclophospho-ribonucleotide-RNA. Its function is as follows. Endoribonuclease that cleaves single-stranded RNAs at 5' of uridylates and releases a product with a 2',3'-cyclic phosphate at the 3'-end. The UU and GU sites are more efficiently cleaved than CU and AU sites. The protein is Uridylate-specific endoribonuclease C (endouc) of Danio rerio (Zebrafish).